The sequence spans 561 residues: Transmembrane protein 209 (561 aa).

A phosphoserine mark is found at serine 9 and serine 11. A helical membrane pass occupies residues 28–48 (VVLAWGLLNVSMAGMIYTEMT). N-linked (GlcNAc...) asparagine glycosylation occurs at asparagine 57. Residues 60-80 (YWPLWYIELALASLFSLNALF) form a helical membrane-spanning segment. Serine 98 bears the Phosphoserine mark. Disordered stretches follow at residues 119–157 (DLAATQIPPAPPSPSIQGQSVLSYSPSRSPSTSPKFTTS) and 195–234 (FSPSPPSPYPTTVGPVESSGLRSRYRSSPTVYNSPTDKED). Residues 133–157 (SIQGQSVLSYSPSRSPSTSPKFTTS) are compositionally biased toward low complexity. Phosphoserine is present on residues serine 201, serine 222, and serine 248. The span at 220–229 (RSSPTVYNSP) shows a compositional bias: polar residues. Positions 250–271 (EEKQHRVKLGSPDSTSPSSSPT) are disordered. Low complexity predominate over residues 260-271 (SPDSTSPSSSPT). Asparagine 274 carries N-linked (GlcNAc...) asparagine glycosylation. The residue at position 278 (serine 278) is a Phosphoserine.

In terms of assembly, interacts with NUP205. As to expression, expressed in the testis.

The protein resides in the membrane. The protein localises to the nucleus envelope. It localises to the golgi apparatus. It is found in the cytoplasm. In terms of biological role, nuclear envelope protein which in association with NUP205, may be involved in nuclear transport of various nuclear proteins in addition to MYC. This Homo sapiens (Human) protein is Transmembrane protein 209 (TMEM209).